The sequence spans 426 residues: 3-phosphoshikimate 1-carboxyvinyltransferase (426 aa).

3-phosphoshikimate is bound by residues lysine 22, serine 23, and arginine 27. Lysine 22 is a phosphoenolpyruvate binding site. Positions 96 and 124 each coordinate phosphoenolpyruvate. 3-phosphoshikimate is bound by residues serine 170, serine 171, glutamine 172, serine 198, aspartate 314, asparagine 337, and lysine 341. Glutamine 172 is a phosphoenolpyruvate binding site. Residue aspartate 314 is the Proton acceptor of the active site. Residues arginine 345, arginine 387, and lysine 412 each contribute to the phosphoenolpyruvate site.

It belongs to the EPSP synthase family. Monomer.

Its subcellular location is the cytoplasm. It catalyses the reaction 3-phosphoshikimate + phosphoenolpyruvate = 5-O-(1-carboxyvinyl)-3-phosphoshikimate + phosphate. It functions in the pathway metabolic intermediate biosynthesis; chorismate biosynthesis; chorismate from D-erythrose 4-phosphate and phosphoenolpyruvate: step 6/7. In terms of biological role, catalyzes the transfer of the enolpyruvyl moiety of phosphoenolpyruvate (PEP) to the 5-hydroxyl of shikimate-3-phosphate (S3P) to produce enolpyruvyl shikimate-3-phosphate and inorganic phosphate. The polypeptide is 3-phosphoshikimate 1-carboxyvinyltransferase (Shewanella baltica (strain OS195)).